The sequence spans 67 residues: Large ribosomal subunit protein bL35 (67 aa).

A disordered region spans residues Met1–Lys41.

The protein belongs to the bacterial ribosomal protein bL35 family.

This Shouchella clausii (strain KSM-K16) (Alkalihalobacillus clausii) protein is Large ribosomal subunit protein bL35.